The sequence spans 62 residues: Photosystem II reaction center protein Z (62 aa).

The next 2 helical transmembrane spans lie at 8–28 (AVFALIATSSILLISVPVVFA) and 41–61 (FSGTSLWIGLVFLVAILNSLI).

This sequence belongs to the PsbZ family. As to quaternary structure, PSII is composed of 1 copy each of membrane proteins PsbA, PsbB, PsbC, PsbD, PsbE, PsbF, PsbH, PsbI, PsbJ, PsbK, PsbL, PsbM, PsbT, PsbY, PsbZ, Psb30/Ycf12, at least 3 peripheral proteins of the oxygen-evolving complex and a large number of cofactors. It forms dimeric complexes.

The protein localises to the plastid. The protein resides in the chloroplast thylakoid membrane. Its function is as follows. May control the interaction of photosystem II (PSII) cores with the light-harvesting antenna, regulates electron flow through the 2 photosystem reaction centers. PSII is a light-driven water plastoquinone oxidoreductase, using light energy to abstract electrons from H(2)O, generating a proton gradient subsequently used for ATP formation. This Calycanthus floridus var. glaucus (Eastern sweetshrub) protein is Photosystem II reaction center protein Z.